The following is a 235-amino-acid chain: Germin-like protein 1-4 (235 aa).

Residues 1-27 (MAAKLPTVVLLASFAAVILSLAAPLLA) form the signal peptide. Cysteines 37 and 55 form a disulfide. N-linked (GlcNAc...) asparagine glycosylation is present at asparagine 60. In terms of domain architecture, Cupin type-1 spans 69 to 226 (PGLGKPADVY…AFQVDGGVVE (158 aa)). 4 residues coordinate Mn(2+): histidine 120, histidine 122, glutamate 127, and histidine 171.

Belongs to the germin family. Oligomer (believed to be a pentamer but probably hexamer).

The protein localises to the secreted. It is found in the extracellular space. Its subcellular location is the apoplast. Its function is as follows. May play a role in plant defense. Probably has no oxalate oxidase activity even if the active site is conserved. This is Germin-like protein 1-4 from Oryza sativa subsp. japonica (Rice).